Here is a 215-residue protein sequence, read N- to C-terminus: Elongation factor Ts (215 aa).

Positions 80–83 (TDFV) are involved in Mg(2+) ion dislocation from EF-Tu.

This sequence belongs to the EF-Ts family.

The protein localises to the cytoplasm. Functionally, associates with the EF-Tu.GDP complex and induces the exchange of GDP to GTP. It remains bound to the aminoacyl-tRNA.EF-Tu.GTP complex up to the GTP hydrolysis stage on the ribosome. The chain is Elongation factor Ts from Alkaliphilus metalliredigens (strain QYMF).